Reading from the N-terminus, the 899-residue chain is DNA mismatch repair protein MutS (899 aa).

Residues 1 to 20 (MGLQKKTDPEQAQADSAASR) form a disordered region. ATP is bound at residue 631 to 638 (GPNMGGKS). A disordered region spans residues 832 to 852 (PPTPDDDEDDFGAAPSAVPAP). Residues 843 to 852 (GAAPSAVPAP) are compositionally biased toward low complexity.

The protein belongs to the DNA mismatch repair MutS family.

In terms of biological role, this protein is involved in the repair of mismatches in DNA. It is possible that it carries out the mismatch recognition step. This protein has a weak ATPase activity. The protein is DNA mismatch repair protein MutS of Cupriavidus necator (strain ATCC 17699 / DSM 428 / KCTC 22496 / NCIMB 10442 / H16 / Stanier 337) (Ralstonia eutropha).